A 122-amino-acid polypeptide reads, in one-letter code: Large ribosomal subunit protein uL24 (122 aa).

It belongs to the universal ribosomal protein uL24 family. Part of the 50S ribosomal subunit.

One of two assembly initiator proteins, it binds directly to the 5'-end of the 23S rRNA, where it nucleates assembly of the 50S subunit. Functionally, located at the polypeptide exit tunnel on the outside of the subunit. The chain is Large ribosomal subunit protein uL24 from Methanosarcina mazei (strain ATCC BAA-159 / DSM 3647 / Goe1 / Go1 / JCM 11833 / OCM 88) (Methanosarcina frisia).